The sequence spans 515 residues: Histidine ammonia-lyase (515 aa).

A cross-link (5-imidazolinone (Ala-Gly)) is located at residues Ala142–Gly144. At Ser143 the chain carries 2,3-didehydroalanine (Ser).

It belongs to the PAL/histidase family. Contains an active site 4-methylidene-imidazol-5-one (MIO), which is formed autocatalytically by cyclization and dehydration of residues Ala-Ser-Gly.

Its subcellular location is the cytoplasm. The catalysed reaction is L-histidine = trans-urocanate + NH4(+). Its pathway is amino-acid degradation; L-histidine degradation into L-glutamate; N-formimidoyl-L-glutamate from L-histidine: step 1/3. This chain is Histidine ammonia-lyase, found in Bradyrhizobium sp. (strain BTAi1 / ATCC BAA-1182).